The sequence spans 123 residues: Small ribosomal subunit protein uS12 (123 aa).

Positions 1-45 (MPTINQLIRKKRQSGATRKKSPALQKSPQKRGVCLQVKTKTPKKP) are disordered. Basic residues predominate over residues 8–21 (IRKKRQSGATRKKS).

The protein belongs to the universal ribosomal protein uS12 family. As to quaternary structure, part of the 30S ribosomal subunit. Contacts proteins S8 and S17. May interact with IF1 in the 30S initiation complex.

With S4 and S5 plays an important role in translational accuracy. In terms of biological role, interacts with and stabilizes bases of the 16S rRNA that are involved in tRNA selection in the A site and with the mRNA backbone. Located at the interface of the 30S and 50S subunits, it traverses the body of the 30S subunit contacting proteins on the other side and probably holding the rRNA structure together. The combined cluster of proteins S8, S12 and S17 appears to hold together the shoulder and platform of the 30S subunit. This Chlamydia muridarum (strain MoPn / Nigg) protein is Small ribosomal subunit protein uS12.